The sequence spans 581 residues: NADH-quinone oxidoreductase subunit C/D (581 aa).

An NADH dehydrogenase I subunit C region spans residues 1 to 172; that stretch reads MSGAELISDL…PPFVMTAARF (172 aa). The segment at 196–581 is NADH dehydrogenase I subunit D; the sequence is ELMILNYGPH…IDYVMSDVDR (386 aa).

This sequence in the N-terminal section; belongs to the complex I 30 kDa subunit family. In the C-terminal section; belongs to the complex I 49 kDa subunit family. In terms of assembly, NDH-1 is composed of 13 different subunits. Subunits NuoB, CD, E, F, and G constitute the peripheral sector of the complex.

The protein resides in the cell inner membrane. It catalyses the reaction a quinone + NADH + 5 H(+)(in) = a quinol + NAD(+) + 4 H(+)(out). Its function is as follows. NDH-1 shuttles electrons from NADH, via FMN and iron-sulfur (Fe-S) centers, to quinones in the respiratory chain. The immediate electron acceptor for the enzyme in this species is believed to be ubiquinone. Couples the redox reaction to proton translocation (for every two electrons transferred, four hydrogen ions are translocated across the cytoplasmic membrane), and thus conserves the redox energy in a proton gradient. The chain is NADH-quinone oxidoreductase subunit C/D from Rhodopseudomonas palustris (strain BisA53).